We begin with the raw amino-acid sequence, 595 residues long: NADPH-dependent diflavin oxidoreductase 1 (595 aa).

A Flavodoxin-like domain is found at 6–150; sequence VLVLYGSQTG…VIDPWLLSFW (145 aa). Residues 12 to 17, 59 to 62, 97 to 106, and Asp132 each bind FMN; these read SQTGTA, ATTG, and LGDSSYPKFN. The region spanning 204-444 is the FAD-binding FR-type domain; the sequence is LRPFPAPLVF…WVKKGSLKFP (241 aa). Residues Arg348, 380-383, and 414-417 each bind FAD; these read RSFS and GLCS. NADP(+) is bound by residues Thr458, 513–514, and 519–523; these read SR and KVYVQ. An FAD-binding site is contributed by Trp594.

Belongs to the NADPH-dependent diflavin oxidoreductase NDOR1 family. The protein in the N-terminal section; belongs to the flavodoxin family. It in the C-terminal section; belongs to the flavoprotein pyridine nucleotide cytochrome reductase family. In terms of assembly, interacts with ciapin1; as part of the cytosolic iron-sulfur (Fe-S) protein assembly (CIA) machinery. FAD serves as cofactor. Requires FMN as cofactor.

Its subcellular location is the cytoplasm. It localises to the perinuclear region. It carries out the reaction 2 oxidized [2Fe-2S]-[protein] + NADPH = 2 reduced [2Fe-2S]-[protein] + NADP(+) + H(+). Its function is as follows. NADPH-dependent reductase which is a central component of the cytosolic iron-sulfur (Fe-S) protein assembly (CIA) machinery. Transfers electrons from NADPH via its FAD and FMN prosthetic groups to the [2Fe-2S] cluster of ciapin1, another key component of the CIA machinery. In turn, this reduced cluster provides electrons for assembly of cytosolic iron-sulfur cluster proteins. It can also reduce the [2Fe-2S] cluster of cisd1 and activate this protein implicated in Fe/S cluster repair. The protein is NADPH-dependent diflavin oxidoreductase 1 of Danio rerio (Zebrafish).